Here is a 657-residue protein sequence, read N- to C-terminus: MSSSNDHVLVPMSQRNNNGLPRTNSRAVRTLAEGDVLSFHHITYRVKVKSGFLVRKTVEKEILSDINGIMKPGLNAILGPTGGGKSSLLDVLAARKDPKGLSGDVLINGAPQPAHFKCCSGYVVQDDVVMGTLTVRENLQFSAALRLPTTMKNHEKNERINTIIKELGLEKVADSKVGTQFIRGISGGERKRTSIGMELITDPSILFLDEPTTGLDSSTANAVLLLLKRMSKQGRTIIFSIHQPRYSIFKLFDSLTLLASGKLVFHGPAQKALEYFASAGYHCEPYNNPADFFLDVINGDSSAVMLNREEQDNEANKTEEPSKGEKPVIENLSEFYINSAIYGETKAELDQLPGAQEKKGTSAFKEPVYVTSFCHQLRWIARRSFKNLLGNPQASVAQLIVTVILGLIIGAIYFDLKYDAAGMQNRAGVLFFLTTNQCFSSVSAVELFVVEKKLFIHEYISGYYRVSSYFFGKVMSDLLPMRFLPSVIFTCVLYFMLGLKKTVDAFFIMMFTLIMVAYTASSMALAIATGQSVVSVATLLMTIAFVFMMLFSGLLVNLRTIGPWLSWLQYFSIPRYGFTALQYNEFLGQEFCPGFNVTDNSTCVNSYAICTGNEYLINQGIELSPWGLWKNHVALACMIIIFLTIAYLKLLFLKKYS.

The tract at residues 1–24 (MSSSNDHVLVPMSQRNNNGLPRTN) is disordered. Residues 1 to 393 (MSSSNDHVLV…SFKNLLGNPQ (393 aa)) lie on the Cytoplasmic side of the membrane. Residues 13–24 (SQRNNNGLPRTN) show a composition bias toward polar residues. The ABC transporter domain occupies 48–285 (VKSGFLVRKT…FASAGYHCEP (238 aa)). ATP-binding positions include 79–86 (GPTGGGKS), 183–189 (RGISGGE), glutamate 210, and histidine 242. In terms of domain architecture, ABC transmembrane type-2 spans 389–653 (LGNPQASVAQ…TIAYLKLLFL (265 aa)). Residues 394–414 (ASVAQLIVTVILGLIIGAIYF) traverse the membrane as a helical segment. Over 415–428 (DLKYDAAGMQNRAG) the chain is Extracellular. Residues 429 to 449 (VLFFLTTNQCFSSVSAVELFV) traverse the membrane as a helical segment. At 450 to 477 (VEKKLFIHEYISGYYRVSSYFFGKVMSD) the chain is on the cytoplasmic side. Residues 478–498 (LLPMRFLPSVIFTCVLYFMLG) form a helical membrane-spanning segment. At 499–506 (LKKTVDAF) the chain is on the extracellular side. A helical membrane pass occupies residues 507 to 527 (FIMMFTLIMVAYTASSMALAI). At 528–535 (ATGQSVVS) the chain is on the cytoplasmic side. A helical transmembrane segment spans residues 536 to 556 (VATLLMTIAFVFMMLFSGLLV). Topologically, residues 557–632 (NLRTIGPWLS…LSPWGLWKNH (76 aa)) are extracellular. Cysteine 592 and cysteine 610 are disulfide-bonded. N-linked (GlcNAc...) asparagine glycosylation is found at asparagine 596 and asparagine 600. A helical membrane pass occupies residues 633-653 (VALACMIIIFLTIAYLKLLFL). Residues 654–657 (KKYS) lie on the Cytoplasmic side of the membrane.

The protein belongs to the ABC transporter superfamily. ABCG family. Eye pigment precursor importer (TC 3.A.1.204) subfamily. Homodimer; disulfide-linked. The minimal functional unit is a homodimer, but the major oligomeric form in plasma membrane is a homotetramer with possibility of higher order oligomerization up to homododecamers. N-glycosylated. Glycosylation-deficient ABCG2 is normally expressed and functional. Post-translationally, phosphorylated. Phosphorylation may regulate the localization to the plasma membrane, the homooligomerization and therefore, the activity of the transporter. As to expression, highly expressed in kidney. Lower expression in liver, colon, heart, spleen, and placenta. Expressed in mammary gland. Expressed in intestinal villi and renal proximal tubules, hepatic bile canalicular membranes, and placental labyrinth cells (at protein level).

The protein resides in the cell membrane. It is found in the apical cell membrane. It localises to the mitochondrion membrane. It catalyses the reaction ATP + H2O + xenobioticSide 1 = ADP + phosphate + xenobioticSide 2.. The enzyme catalyses riboflavin(in) + ATP + H2O = riboflavin(out) + ADP + phosphate + H(+). The catalysed reaction is pheophorbide a(in) + ATP + H2O = pheophorbide a(out) + ADP + phosphate + H(+). It carries out the reaction urate(in) + ATP + H2O = urate(out) + ADP + phosphate + H(+). It catalyses the reaction indoxyl sulfate(in) + ATP + H2O = indoxyl sulfate(out) + ADP + phosphate + H(+). The enzyme catalyses sphing-4-enine 1-phosphate(in) + ATP + H2O = sphing-4-enine 1-phosphate(out) + ADP + phosphate + H(+). The catalysed reaction is estrone 3-sulfate(in) + ATP + H2O = estrone 3-sulfate(out) + ADP + phosphate + H(+). It carries out the reaction dehydroepiandrosterone 3-sulfate(in) + ATP + H2O = dehydroepiandrosterone 3-sulfate(out) + ADP + phosphate + H(+). It catalyses the reaction 4-methylumbelliferone sulfate(in) + ATP + H2O = 4-methylumbelliferone sulfate(out) + ADP + phosphate + H(+). The enzyme catalyses 5,7-dimethyl-2-methylamino-4-(3-pyridylmethyl)-1,3-benzothiazol-6-yl beta-D-glucuronate(in) + ATP + H2O = 5,7-dimethyl-2-methylamino-4-(3-pyridylmethyl)-1,3-benzothiazol-6-yl beta-D-glucuronate(out) + ADP + phosphate + H(+). The catalysed reaction is 4-methylumbelliferone beta-D-glucuronate(in) + ATP + H2O = 4-methylumbelliferone beta-D-glucuronate(out) + ADP + phosphate + H(+). It carries out the reaction 5,7-dimethyl-2-methylamino-4-(3-pyridylmethyl)-1,3-benzothiazol-6-yl sulfate(in) + ATP + H2O = 5,7-dimethyl-2-methylamino-4-(3-pyridylmethyl)-1,3-benzothiazol-6-yl sulfate(out) + ADP + phosphate + H(+). It catalyses the reaction 17beta-estradiol 17-O-(beta-D-glucuronate)(in) + ATP + H2O = 17beta-estradiol 17-O-(beta-D-glucuronate)(out) + ADP + phosphate + H(+). The enzyme catalyses methotrexate(in) + ATP + H2O = methotrexate(out) + ADP + phosphate + H(+). The catalysed reaction is itaconate(in) + ATP + H2O = itaconate(out) + ADP + phosphate + H(+). Specifically inhibited by the fungal toxin fumitremorgin C and Ko143. Its function is as follows. Broad substrate specificity ATP-dependent transporter of the ATP-binding cassette (ABC) family that actively extrudes a wide variety of physiological compounds, dietary toxins and xenobiotics from cells. Involved in porphyrin homeostasis, mediating the export of protoporphyrin IX (PPIX) from both mitochondria to cytosol and cytosol to extracellular space, it also functions in the cellular export of heme. Also mediates the efflux of sphingosine-1-P from cells. Acts as a urate exporter functioning in both renal and extrarenal urate excretion. In kidney, it also functions as a physiological exporter of the uremic toxin indoxyl sulfate. Also involved in the excretion of steroids like estrone 3-sulfate/E1S, 3beta-sulfooxy-androst-5-en-17-one/DHEAS, and other sulfate conjugates. Mediates the secretion of the riboflavin and biotin vitamins into milk. Extrudes pheophorbide a, a phototoxic porphyrin catabolite of chlorophyll, reducing its bioavailability. Plays an important role in the exclusion of xenobiotics from the brain. It confers to cells a resistance to multiple drugs and other xenobiotics including mitoxantrone, pheophorbide, camptothecin, methotrexate, azidothymidine, and the anthracyclines daunorubicin and doxorubicin, through the control of their efflux. In placenta, it limits the penetration of drugs from the maternal plasma into the fetus. May play a role in early stem cell self-renewal by blocking differentiation. In inflammatory macrophages, exports itaconate from the cytosol to the extracellular compartment and limits the activation of TFEB-dependent lysosome biogenesis involved in antibacterial innate immune response. This chain is Broad substrate specificity ATP-binding cassette transporter ABCG2 (Abcg2), found in Mus musculus (Mouse).